A 324-amino-acid polypeptide reads, in one-letter code: THUMP domain-containing protein 1 homolog (324 aa).

Disordered stretches follow at residues 1–24 (MEPASKKSKMGKNVKFNNNKKKYF) and 67–104 (SEKPENEPEKKQPEEGAGGDAGEDDPKPAAGGTSDDDD). Residues 68-80 (EKPENEPEKKQPE) are compositionally biased toward basic and acidic residues. Position 99 is a phosphothreonine (Thr99). The residue at position 100 (Ser100) is a Phosphoserine. The THUMP domain maps to 154 to 260 (DIATTGKSMS…RGWCLLSVID (107 aa)). The tract at residues 275-324 (NPSDKKSSGEGDSKSETSEVANGNDKEQAESSEESKSNDDENKDSTENDK) is disordered. 2 stretches are compositionally biased toward basic and acidic residues: residues 277 to 291 (SDKKSSGEGDSKSET) and 298 to 324 (NDKEQAESSEESKSNDDENKDSTENDK).

Belongs to the THUMPD1 family.

The chain is THUMP domain-containing protein 1 homolog from Drosophila melanogaster (Fruit fly).